A 215-amino-acid chain; its full sequence is Peroxiredoxin (215 aa).

Positions 6–161 constitute a Thioredoxin domain; the sequence is PLIGEEFPRL…ILRAVRALQT (156 aa). Residue Cys-48 is the Cysteine sulfenic acid (-SOH) intermediate of the active site. Arg-124 contributes to the substrate binding site. A disulfide bridge connects residues Cys-205 and Cys-211.

It belongs to the peroxiredoxin family. Prx6 subfamily. As to quaternary structure, homodecamer. Pentamer of dimers that assemble into a ring structure.

The protein localises to the cytoplasm. The catalysed reaction is a hydroperoxide + [thioredoxin]-dithiol = an alcohol + [thioredoxin]-disulfide + H2O. In terms of biological role, thiol-specific peroxidase that catalyzes the reduction of hydrogen peroxide and organic hydroperoxides to water and alcohols, respectively. Plays a role in cell protection against oxidative stress by detoxifying peroxides. The polypeptide is Peroxiredoxin (Thermotoga petrophila (strain ATCC BAA-488 / DSM 13995 / JCM 10881 / RKU-1)).